A 490-amino-acid polypeptide reads, in one-letter code: Phosphoethanolamine N-methyltransferase 3 (490 aa).

S-adenosyl-L-homocysteine-binding residues include G60, R65, D81, D106, V107, and N125. Phosphocholine is bound by residues S158, S163, G164, R168, and Y175. N-methylethanolamine phosphate is bound by residues 244–245 and Y253; that span reads QY. Residue Y253 participates in phosphocholine binding. Residues V262, S263, G289, D311, D337, C338, and R354 each coordinate S-adenosyl-L-homocysteine. Y385, Y399, R403, Y405, and K471 together coordinate phosphocholine. N-methylethanolamine phosphate is bound by residues Y385, Y399, 403-405, and K471; that span reads RGY.

The protein belongs to the class I-like SAM-binding methyltransferase superfamily. PEAMT family. Expressed in root vasculature, shoots, rosettes leaves, cauline leaves, sepals, petals, anther filaments and ovules. Highly expressed in leaf vasculature.

The protein localises to the cytoplasm. The enzyme catalyses phosphoethanolamine + S-adenosyl-L-methionine = N-methylethanolamine phosphate + S-adenosyl-L-homocysteine + H(+). The catalysed reaction is N-methylethanolamine phosphate + S-adenosyl-L-methionine = N,N-dimethylethanolamine phosphate + S-adenosyl-L-homocysteine + H(+). It carries out the reaction N,N-dimethylethanolamine phosphate + S-adenosyl-L-methionine = phosphocholine + S-adenosyl-L-homocysteine + H(+). It functions in the pathway phospholipid metabolism; phosphatidylcholine biosynthesis; phosphocholine from phosphoethanolamine: step 1/1. In terms of biological role, involved in phosphocholine biosynthesis. Catalyzes the N-methylation of phosphoethanolamine, phosphomonomethylethanolamine and phosphodimethylethanolamine, the three methylation steps required to convert phosphoethanolamine to phosphocholine (PC). In association with NMT1, regulates PC homeostasis, phase transition at the shoot apex, coordinated organ development, and fertility. In associtation with NMT1, involved in phosphatidylcholine biosynthesis and vascular development. This Arabidopsis thaliana (Mouse-ear cress) protein is Phosphoethanolamine N-methyltransferase 3.